The sequence spans 1362 residues: Integrator complex subunit 2 homolog (1362 aa).

The segment covering Met1–Asn10 has biased composition (low complexity). 3 disordered regions span residues Met1–Ser20, Thr629–Asn660, and Asn928–Glu963. Basic and acidic residues predominate over residues Asp945 to Glu955.

It belongs to the Integrator subunit 2 family. Component of the Integrator complex. The core complex associates with protein phosphatase 2A subunits, to form the Integrator-PP2A (INTAC) complex.

Its subcellular location is the nucleus. The protein resides in the cytoplasm. Functionally, component of the integrator complex, a multiprotein complex that terminates RNA polymerase II (Pol II) transcription in the promoter-proximal region of genes. The integrator complex provides a quality checkpoint during transcription elongation by driving premature transcription termination of transcripts that are unfavorably configured for transcriptional elongation: the complex terminates transcription by (1) catalyzing dephosphorylation of the C-terminal domain (CTD) of Pol II subunit polr2a, (2) degrading the exiting nascent RNA transcript via endonuclease activity and (3) promoting the release of Pol II from bound DNA. The integrator complex is also involved in terminating the synthesis of non-coding Pol II transcripts, such as enhancer RNAs (eRNAs), small nuclear RNAs (snRNAs), telomerase RNAs and long non-coding RNAs (lncRNAs). This Dictyostelium discoideum (Social amoeba) protein is Integrator complex subunit 2 homolog (ints2).